A 541-amino-acid chain; its full sequence is Zinc finger protein 513 (541 aa).

A disordered region spans residues 1 to 120 (MPRRKQSHPQ…ARGERPGPAC (120 aa)). The segment covering 44–55 (LEFEEEEEEEEG) has biased composition (acidic residues). 2 positions are modified to phosphoserine: Ser85 and Ser96. Residues 103–115 (EPARGPGEARGER) show a composition bias toward basic and acidic residues. 8 consecutive C2H2-type zinc fingers follow at residues 150-172 (YSCR…MQTH), 178-200 (FRCG…TRTH), 206-228 (YRCP…QRTH), 360-382 (FACS…MKTH), 388-410 (FRCA…QRVH), 416-438 (YKCP…GRIH), 444-466 (FRCS…MLRH), and 472-494 (FRCA…QKVH). Residues 492 to 541 (KVHGHGGAGGPGLSAPEGWAPPHSPPSVLSTRGSAALGATGSRALHTDSP) are disordered.

The protein belongs to the krueppel C2H2-type zinc-finger protein family. As to quaternary structure, binds DNA. Can associate with the proximal promoter regions of PAX6 and SP4, and their known targets including ARR3, RHO, OPN1MW2 and OPN1SW.

Its subcellular location is the nucleus. Functionally, transcriptional regulator that plays a role in retinal development and maintenance. In Rattus norvegicus (Rat), this protein is Zinc finger protein 513 (Znf513).